Here is a 625-residue protein sequence, read N- to C-terminus: MKAQADSRFDYVKINLASPERIRQWGERSLPNGVVVGEVTKPETINYRTLKPEMDGLFCERIFGPSKDWECWCGKYKRVRHRGIVCERCGVEVTESRVRRHRMGFIKLAAPVTHVWYLKGIPSYLSILLDMALRDVEQIVYFNSYVVLDPGNASNLSYKQLLTEDQWIEIEEQIYAEDSELYGIEVGIGAEAIQRLLQEINLEEVAEKLREEILESKGQKRAKLIKRLRVIDNFVATNSRPDWMVLSVIPVIPPDLRPMVQLDGGRFATSDLNDLYRRVINRNNRLSRLQEILAPEIIVRNEKRMLQEAVDALIDNGRRGRTVVGANNRALKSLSDIIEGKQGRFRQNLLGKRVDYSGRSVIVVGPKLKIYQCGLPREMAIELFQPFVIHRLIRLGLVNNIKAAKKLIMREDPSVWTVLEEVITGHPVLLNRAPTLHRLGIQAFEPILVEGRAIQLHPLVCPAFNADFDGDQMAVHVPLSLEAQSEARLLMLACHNILSPATGKPIVAPSQDMVLGCYYLTAENPKAQKGANRYFGSIPDAIKAYEQGTVDLHAYVWLRYNGDVVTHKPDTEVLKTETLDDGSVIKHYRERRVREKDGEVISQFIRTTPGRIIYNKTIEDALVAL.

Residues C71, C73, C86, and C89 each coordinate Zn(2+). D467, D469, and D471 together coordinate Mg(2+).

Belongs to the RNA polymerase beta' chain family. RpoC1 subfamily. In terms of assembly, in cyanobacteria the RNAP catalytic core is composed of 2 alpha, 1 beta, 1 beta', 1 gamma and 1 omega subunit. When a sigma factor is associated with the core the holoenzyme is formed, which can initiate transcription. The cofactor is Mg(2+). Zn(2+) is required as a cofactor.

The enzyme catalyses RNA(n) + a ribonucleoside 5'-triphosphate = RNA(n+1) + diphosphate. Functionally, DNA-dependent RNA polymerase catalyzes the transcription of DNA into RNA using the four ribonucleoside triphosphates as substrates. This chain is DNA-directed RNA polymerase subunit gamma, found in Rippkaea orientalis (strain PCC 8801 / RF-1) (Cyanothece sp. (strain PCC 8801)).